The chain runs to 384 residues: tRNA-specific 2-thiouridylase MnmA (384 aa).

The disordered stretch occupies residues 1-26 (MDEGIRASGGIRACQTGKQKQGRKRP). ATP-binding positions include 36 to 43 (GMSGGVDS) and Met-62. The segment at 122–124 (NPD) is interaction with target base in tRNA. Residue Cys-127 is the Nucleophile of the active site. An intrachain disulfide couples Cys-127 to Cys-223. Gly-151 is a binding site for ATP. Residues 173–175 (KDQ) form an interaction with tRNA region. Cys-223 functions as the Cysteine persulfide intermediate in the catalytic mechanism. Positions 334-335 (RY) are interaction with tRNA.

The protein belongs to the MnmA/TRMU family.

It localises to the cytoplasm. It catalyses the reaction S-sulfanyl-L-cysteinyl-[protein] + uridine(34) in tRNA + AH2 + ATP = 2-thiouridine(34) in tRNA + L-cysteinyl-[protein] + A + AMP + diphosphate + H(+). Its function is as follows. Catalyzes the 2-thiolation of uridine at the wobble position (U34) of tRNA, leading to the formation of s(2)U34. In Chromobacterium violaceum (strain ATCC 12472 / DSM 30191 / JCM 1249 / CCUG 213 / NBRC 12614 / NCIMB 9131 / NCTC 9757 / MK), this protein is tRNA-specific 2-thiouridylase MnmA.